The chain runs to 439 residues: GTPase Der (439 aa).

2 EngA-type G domains span residues 3–167 (PTVA…DKVG) and 176–351 (IKVA…GNYT). Residues 9–16 (GRPNVGKS), 56–60 (DTGGI), 119–122 (NKID), 182–189 (GKPNTGKS), 229–233 (DTAGL), and 294–297 (NKWD) contribute to the GTP site. The 85-residue stretch at 352–436 (RRITTGQIND…PIVFLIREKG (85 aa)) folds into the KH-like domain.

This sequence belongs to the TRAFAC class TrmE-Era-EngA-EngB-Septin-like GTPase superfamily. EngA (Der) GTPase family. Associates with the 50S ribosomal subunit.

Its function is as follows. GTPase that plays an essential role in the late steps of ribosome biogenesis. In Caldicellulosiruptor saccharolyticus (strain ATCC 43494 / DSM 8903 / Tp8T 6331), this protein is GTPase Der.